A 427-amino-acid chain; its full sequence is Adenylosuccinate synthetase (427 aa).

Residues 12–18 (GDEGKGK) and 40–42 (GHT) contribute to the GTP site. Residue Asp13 is the Proton acceptor of the active site. Mg(2+)-binding residues include Asp13 and Gly40. IMP-binding positions include 13-16 (DEGK), 38-41 (NAGH), Thr126, Arg140, Gln221, Thr236, and Arg299. Residue His41 is the Proton donor of the active site. 295–301 (STTKRPR) contributes to the substrate binding site. GTP contacts are provided by residues Arg301, 327–329 (KLD), and 409–411 (SVG).

This sequence belongs to the adenylosuccinate synthetase family. In terms of assembly, homodimer. Mg(2+) is required as a cofactor.

It is found in the cytoplasm. It catalyses the reaction IMP + L-aspartate + GTP = N(6)-(1,2-dicarboxyethyl)-AMP + GDP + phosphate + 2 H(+). It participates in purine metabolism; AMP biosynthesis via de novo pathway; AMP from IMP: step 1/2. Plays an important role in the de novo pathway of purine nucleotide biosynthesis. Catalyzes the first committed step in the biosynthesis of AMP from IMP. The polypeptide is Adenylosuccinate synthetase (Borrelia recurrentis (strain A1)).